The primary structure comprises 774 residues: Beta-xylosidase/alpha-L-arabinofuranosidase 2 (774 aa).

A signal peptide spans 1-33; the sequence is MASVENRTPNVSVFLCFFVLFATLLLSGGRVSS. N-linked (GlcNAc...) asparagine glycosylation occurs at asparagine 136. Aspartate 303 is an active-site residue. An N-linked (GlcNAc...) asparagine glycan is attached at asparagine 437.

Belongs to the glycoside hydrolase 3 family.

Its subcellular location is the secreted. It is found in the extracellular space. The protein resides in the extracellular matrix. It carries out the reaction Hydrolysis of (1-&gt;4)-beta-D-xylans, to remove successive D-xylose residues from the non-reducing termini.. The catalysed reaction is Hydrolysis of terminal non-reducing alpha-L-arabinofuranoside residues in alpha-L-arabinosides.. Its function is as follows. A bifunctional beta-xylosidase/alpha-L-arabinosidase, exo-enzyme that acts synergistically with endohydrolases. Releases xylose and arabinose from cell walls. This Medicago sativa subsp. varia (Alfalfa) protein is Beta-xylosidase/alpha-L-arabinofuranosidase 2.